The following is a 201-amino-acid chain: Recombination protein RecR (201 aa).

A C4-type zinc finger spans residues 59-74 (CKICGNIDTENICRIC). In terms of domain architecture, Toprim spans 82 to 177 (SIIAIVETVA…KISRLASGIP (96 aa)).

It belongs to the RecR family.

May play a role in DNA repair. It seems to be involved in an RecBC-independent recombinational process of DNA repair. It may act with RecF and RecO. In Rickettsia massiliae (strain Mtu5), this protein is Recombination protein RecR.